A 188-amino-acid polypeptide reads, in one-letter code: Probable nicotinate-nucleotide adenylyltransferase (188 aa).

The protein belongs to the NadD family.

It carries out the reaction nicotinate beta-D-ribonucleotide + ATP + H(+) = deamido-NAD(+) + diphosphate. The protein operates within cofactor biosynthesis; NAD(+) biosynthesis; deamido-NAD(+) from nicotinate D-ribonucleotide: step 1/1. In terms of biological role, catalyzes the reversible adenylation of nicotinate mononucleotide (NaMN) to nicotinic acid adenine dinucleotide (NaAD). This Listeria monocytogenes serotype 4a (strain HCC23) protein is Probable nicotinate-nucleotide adenylyltransferase.